The following is a 416-amino-acid chain: Enterobactin exporter EntS (416 aa).

The Cytoplasmic segment spans residues methionine 1 to alanine 21. The chain crosses the membrane as a helical span at residues valine 22–valine 42. At glutamine 43–glycine 55 the chain is on the periplasmic side. The chain crosses the membrane as a helical span at residues leucine 56–alanine 76. At aspartate 77–lysine 83 the chain is on the cytoplasmic side. A helical membrane pass occupies residues valine 84–leucine 104. Over leucine 105–serine 109 the chain is Periplasmic. A helical membrane pass occupies residues leucine 110 to alanine 130. Topologically, residues leucine 131–arginine 156 are cytoplasmic. Residues leucine 157–tryptophan 177 form a helical membrane-spanning segment. Position 178 (asparagine 178) is a topological domain, periplasmic. The helical transmembrane segment at tyrosine 179–leucine 199 threads the bilayer. Over proline 200 to arginine 218 the chain is Cytoplasmic. Residues phenylalanine 219 to alanine 239 traverse the membrane as a helical segment. Topologically, residues serine 240 to serine 256 are periplasmic. Residues alanine 257–threonine 277 traverse the membrane as a helical segment. The Cytoplasmic segment spans residues serine 278–proline 287. Residues glycine 288–leucine 307 traverse the membrane as a helical segment. The Periplasmic segment spans residues methionine 308–leucine 313. The chain crosses the membrane as a helical span at residues glycine 314–leucine 336. Residues glutamine 337–asparagine 356 lie on the Cytoplasmic side of the membrane. A helical transmembrane segment spans residues valine 357–valine 377. Residue alanine 378 is a topological domain, periplasmic. Residues serine 379–valine 399 traverse the membrane as a helical segment. Topologically, residues glutamate 400–serine 416 are cytoplasmic.

The protein belongs to the major facilitator superfamily. EntS (TC 2.A.1.38) family.

Its subcellular location is the cell inner membrane. Its function is as follows. Component of an export pathway for enterobactin. The polypeptide is Enterobactin exporter EntS (Shigella boydii serotype 4 (strain Sb227)).